The sequence spans 434 residues: Histidinol dehydrogenase (434 aa).

NAD(+)-binding residues include tyrosine 130, glutamine 191, and asparagine 214. Positions 237, 259, and 262 each coordinate substrate. The Zn(2+) site is built by glutamine 259 and histidine 262. Active-site proton acceptor residues include glutamate 328 and histidine 329. 4 residues coordinate substrate: histidine 329, aspartate 362, glutamate 416, and histidine 421. Aspartate 362 contributes to the Zn(2+) binding site. Zn(2+) is bound at residue histidine 421.

This sequence belongs to the histidinol dehydrogenase family. The cofactor is Zn(2+).

The catalysed reaction is L-histidinol + 2 NAD(+) + H2O = L-histidine + 2 NADH + 3 H(+). It functions in the pathway amino-acid biosynthesis; L-histidine biosynthesis; L-histidine from 5-phospho-alpha-D-ribose 1-diphosphate: step 9/9. Functionally, catalyzes the sequential NAD-dependent oxidations of L-histidinol to L-histidinaldehyde and then to L-histidine. In Rhodospirillum rubrum (strain ATCC 11170 / ATH 1.1.1 / DSM 467 / LMG 4362 / NCIMB 8255 / S1), this protein is Histidinol dehydrogenase.